The sequence spans 372 residues: Homoserine dehydrogenase (372 aa).

V13, G15, V16, and T99 together coordinate NAD(+). Positions 16 and 99 each coordinate NADP(+). The NADPH site is built by V16, T99, S100, and K123. Position 123 (K123) interacts with NADP(+). Na(+)-binding residues include E150, V153, A155, and L157. NADP(+) contacts are provided by G216 and E219. Positions 219 and 230 each coordinate L-homoserine. K234 functions as the Proton donor in the catalytic mechanism. G352 serves as a coordination point for NAD(+). G352 is a binding site for NADP(+). G352 is a binding site for NADPH.

It belongs to the homoserine dehydrogenase family. In terms of assembly, homodimer. The cofactor is a metal cation.

It catalyses the reaction L-homoserine + NADP(+) = L-aspartate 4-semialdehyde + NADPH + H(+). The catalysed reaction is L-homoserine + NAD(+) = L-aspartate 4-semialdehyde + NADH + H(+). The protein operates within amino-acid biosynthesis; L-methionine biosynthesis via de novo pathway; L-homoserine from L-aspartate: step 3/3. It participates in amino-acid biosynthesis; L-threonine biosynthesis; L-threonine from L-aspartate: step 3/5. Functionally, catalyzes the conversion of L-aspartate-beta-semialdehyde (L-Asa) to L-homoserine (L-Hse), the third step in the biosynthesis of amino acids that derive from aspartate (the aspartate family of amino acids), including methioinine and threonine, the latter of which is a precursor to isoleucine; production of homoserine leads to a branch-point in the pathway as it can either be O-phosphorylated for processing to threonine, or O-acylated for processing to methionine. The sequence is that of Homoserine dehydrogenase from Paracoccidioides brasiliensis (strain Pb18).